The sequence spans 250 residues: Small ribosomal subunit protein uS2 (250 aa).

It belongs to the universal ribosomal protein uS2 family.

The protein is Small ribosomal subunit protein uS2 of Albidiferax ferrireducens (strain ATCC BAA-621 / DSM 15236 / T118) (Rhodoferax ferrireducens).